The sequence spans 135 residues: MSRTVILTRREVFSSSHRLYSDKLSLEENKKIYGKCINSHGHNYVLEVSIKGAVKEDIGMFMNITELKEILKEKVMDKLDHKNLENDVPELKGIVTTTENLSIFIWDQLFPSLKDFLYEVKILETENNFVVYRGE.

Residue His-17 participates in Zn(2+) binding. Cys-36 serves as the catalytic Proton acceptor. 2 residues coordinate Zn(2+): His-40 and His-42. Active-site charge relay system residues include His-81 and Glu-124.

Belongs to the PTPS family. In terms of assembly, homohexamer formed of two homotrimers in a head to head fashion. It depends on Zn(2+) as a cofactor.

It carries out the reaction 7,8-dihydroneopterin 3'-triphosphate = 6-pyruvoyl-5,6,7,8-tetrahydropterin + triphosphate + H(+). Its pathway is cofactor biosynthesis; tetrahydrobiopterin biosynthesis; tetrahydrobiopterin from 7,8-dihydroneopterin triphosphate: step 1/3. Involved in the biosynthesis of tetrahydrobiopterin, an essential cofactor of aromatic amino acid hydroxylases. Catalyzes the transformation of 7,8-dihydroneopterin triphosphate into 6-pyruvoyl tetrahydropterin. The sequence is that of 6-pyruvoyl tetrahydrobiopterin synthase (ptsA) from Dictyostelium discoideum (Social amoeba).